The primary structure comprises 512 residues: MLSLKAFLALSLSIHLSQGLVASVSHRRANACTELSRSYPDSTIHPGSSVFAEDVIEPWSQTCQTTPTCVFAPASAEEVAGGLAILRKADQTFAVRTQGHMPIPGAADISNGVLMVTTSLNSVQYADDSKSVVQIGAGNRWLDVYKVLAKDNLAVVGGRFGQVGVSGLLLGGGISYFNSDHGWGANSVVNYEVVLANGTVCAANAQQNSDLYWALKGGSFNFGIVTRFDLATFSVPYMWGGSAFYDASALDPLVNAYASYAVASGGSSDPAAHSDPSILYNVTTGEVSGYGIYMHRGDDPAPAALKNFTDIPSTFQDFRVGKTILGLENDTTPVNFGVGNRRQLFSSTALASSAEAVYLVNQTFFDVIAANPQIKTTTDLSVTNTYQLFTPGMIRAAKASGGDPIGLYDPLGNGVLAVLYGGNWADAKDDEIIYKFFQDMIDELDNRAKKLGLYYDFVYLNDAAPTQTKDIFQKFSNGTALPKLREIAESYDPDQVFQTLTPGGFKLINSPA.

Positions 1 to 19 are cleaved as a signal peptide; it reads MLSLKAFLALSLSIHLSQG. An FAD-binding PCMH-type domain is found at 63 to 235; it reads CQTTPTCVFA…TRFDLATFSV (173 aa). A Pros-8alpha-FAD histidine modification is found at His100. N-linked (GlcNAc...) asparagine glycans are attached at residues Asn197, Asn281, Asn307, Asn329, Asn361, and Asn477.

The protein belongs to the oxygen-dependent FAD-linked oxidoreductase family.

Its pathway is sesquiterpene biosynthesis. FAD-dependent monooxygenase; part of the gene cluster that mediates the biosynthesis of PR-toxin, a bicyclic sesquiterpene belonging to the eremophilane class and acting as a mycotoxin. The first step of the pathway is catalyzed by the aristolochene synthase which performs the cyclization of trans,trans-farnesyl diphosphate (FPP) to the bicyclic sesquiterpene aristolochene. Following the formation of aristolochene, the non-oxygenated aristolochene is converted to the trioxygenated intermediate eremofortin B, via 7-epi-neopetasone. This conversion appears to involve three enzymes, a hydroxysterol oxidase-like enzyme, the quinone-oxidase prx3 that forms the quinone-type-structure in the bicyclic nucleus of aristolochene with the C8-oxo group and the C-3 hydroxyl group, and the P450 monooxygenase ORF6 that introduces the epoxide at the double bond between carbons 1 and 2. No monoxy or dioxy-intermediates have been reported to be released to the broth, so these three early oxidative reactions may be coupled together. Eremofortin B is further oxidized by another P450 monooxygenase, that introduces a second epoxide between carbons 7 and 11 prior to acetylation to eremofortin A by the acetyltransferase ORF8. The second epoxidation may be performed by a second P450 monooxygenase. After the acetylation step, eremofortin A is converted to eremofortin C and then to PR-toxin. First the conversion of eremofortin A to eremofortin C proceeds by oxidation of the side chain of the molecule at C-12 and is catalyzed by the short-chain oxidoreductase prx1. The cytochrome P450 monooxygenase ORF6 is probably also involved in this step. The primary alcohol formed at C-12 is finally oxidized by the short-chain alcohol dehydrogenase prx4 that forms PR-toxin. This Penicillium roqueforti (strain FM164) protein is FAD-dependent monooxygenase prx3.